The sequence spans 241 residues: Caffeoyl-CoA O-methyltransferase (241 aa).

Substrate is bound at residue Lys-14. S-adenosyl-L-methionine is bound by residues Thr-58, Glu-80, 82–83, Ser-88, Asp-106, and Ala-135; that span reads GV. Asp-158 contributes to the substrate binding site. Asp-158 contacts a divalent metal cation. Position 160 (Asp-160) interacts with S-adenosyl-L-methionine. 2 residues coordinate a divalent metal cation: Asp-184 and Asn-185.

This sequence belongs to the class I-like SAM-binding methyltransferase superfamily. Cation-dependent O-methyltransferase family. CCoAMT subfamily. A divalent metal cation is required as a cofactor.

The enzyme catalyses (E)-caffeoyl-CoA + S-adenosyl-L-methionine = (E)-feruloyl-CoA + S-adenosyl-L-homocysteine + H(+). It participates in aromatic compound metabolism; phenylpropanoid biosynthesis. Functionally, methylates caffeoyl-CoA to feruloyl-CoA and 5-hydroxyferuloyl-CoA to sinapoyl-CoA. Plays a role in the synthesis of feruloylated polysaccharides. Involved in the reinforcement of the plant cell wall. Also involved in the responding to wounding or pathogen challenge by the increased formation of cell wall-bound ferulic acid polymers. The polypeptide is Caffeoyl-CoA O-methyltransferase (Stellaria longipes (Longstalk starwort)).